Here is a 109-residue protein sequence, read N- to C-terminus: Large ribosomal subunit protein P2 (109 aa).

The interval 63–109 (ASVPSGGAGGASGGAAAAGGAAEEAKEEEKEEEKEESDEDMGFGLFD) is disordered. The span at 68 to 79 (GGAGGASGGAAA) shows a compositional bias: gly residues. The span at 91-103 (EKEEEKEESDEDM) shows a compositional bias: acidic residues. Position 99 is a phosphoserine (S99).

This sequence belongs to the eukaryotic ribosomal protein P1/P2 family. As to quaternary structure, P1 and P2 exist as dimers at the large ribosomal subunit.

Functionally, plays an important role in the elongation step of protein synthesis. This is Large ribosomal subunit protein P2 from Fusarium culmorum.